The chain runs to 235 residues: Phosphatidylserine decarboxylase proenzyme (235 aa).

The active-site Schiff-base intermediate with substrate; via pyruvic acid is the Ser204. Ser204 bears the Pyruvic acid (Ser); by autocatalysis mark.

Belongs to the phosphatidylserine decarboxylase family. PSD-A subfamily. As to quaternary structure, heterodimer of a large membrane-associated beta subunit and a small pyruvoyl-containing alpha subunit. Pyruvate is required as a cofactor. Is synthesized initially as an inactive proenzyme. Formation of the active enzyme involves a self-maturation process in which the active site pyruvoyl group is generated from an internal serine residue via an autocatalytic post-translational modification. Two non-identical subunits are generated from the proenzyme in this reaction, and the pyruvate is formed at the N-terminus of the alpha chain, which is derived from the carboxyl end of the proenzyme. The post-translation cleavage follows an unusual pathway, termed non-hydrolytic serinolysis, in which the side chain hydroxyl group of the serine supplies its oxygen atom to form the C-terminus of the beta chain, while the remainder of the serine residue undergoes an oxidative deamination to produce ammonia and the pyruvoyl prosthetic group on the alpha chain.

The protein resides in the cell membrane. The enzyme catalyses a 1,2-diacyl-sn-glycero-3-phospho-L-serine + H(+) = a 1,2-diacyl-sn-glycero-3-phosphoethanolamine + CO2. It functions in the pathway phospholipid metabolism; phosphatidylethanolamine biosynthesis; phosphatidylethanolamine from CDP-diacylglycerol: step 2/2. Functionally, catalyzes the formation of phosphatidylethanolamine (PtdEtn) from phosphatidylserine (PtdSer). In Mycobacterium sp. (strain JLS), this protein is Phosphatidylserine decarboxylase proenzyme.